Reading from the N-terminus, the 145-residue chain is D-aminoacyl-tRNA deacylase (145 aa).

A Gly-cisPro motif, important for rejection of L-amino acids motif is present at residues 137–138 (GP).

This sequence belongs to the DTD family. As to quaternary structure, homodimer.

It localises to the cytoplasm. The catalysed reaction is glycyl-tRNA(Ala) + H2O = tRNA(Ala) + glycine + H(+). It carries out the reaction a D-aminoacyl-tRNA + H2O = a tRNA + a D-alpha-amino acid + H(+). Its function is as follows. An aminoacyl-tRNA editing enzyme that deacylates mischarged D-aminoacyl-tRNAs. Also deacylates mischarged glycyl-tRNA(Ala), protecting cells against glycine mischarging by AlaRS. Acts via tRNA-based rather than protein-based catalysis; rejects L-amino acids rather than detecting D-amino acids in the active site. By recycling D-aminoacyl-tRNA to D-amino acids and free tRNA molecules, this enzyme counteracts the toxicity associated with the formation of D-aminoacyl-tRNA entities in vivo and helps enforce protein L-homochirality. The polypeptide is D-aminoacyl-tRNA deacylase (Salmonella typhi).